The primary structure comprises 513 residues: Putative ribose/galactose/methyl galactoside import ATP-binding protein (513 aa).

2 consecutive ABC transporter domains span residues 24 to 260 (LSAE…VGRE) and 270 to 510 (VPIG…VMEL). 56–63 (GENGAGKS) is an ATP binding site.

It belongs to the ABC transporter superfamily. Carbohydrate importer 2 (CUT2) (TC 3.A.1.2) family.

The protein localises to the cell inner membrane. It carries out the reaction D-ribose(out) + ATP + H2O = D-ribose(in) + ADP + phosphate + H(+). The catalysed reaction is D-galactose(out) + ATP + H2O = D-galactose(in) + ADP + phosphate + H(+). Functionally, part of an ABC transporter complex involved in carbohydrate import. Could be involved in ribose, galactose and/or methyl galactoside import. Responsible for energy coupling to the transport system. The sequence is that of Putative ribose/galactose/methyl galactoside import ATP-binding protein from Rhizobium johnstonii (strain DSM 114642 / LMG 32736 / 3841) (Rhizobium leguminosarum bv. viciae).